Consider the following 462-residue polypeptide: Cysteine--tRNA ligase (462 aa).

Residue cysteine 24 participates in Zn(2+) binding. The 'HIGH' region motif lies at 26-36; it reads PTVYDDAHLGH. Zn(2+) contacts are provided by cysteine 199, histidine 224, and glutamate 228. Residues 256 to 260 carry the 'KMSKS' region motif; that stretch reads KMSKS. Lysine 259 lines the ATP pocket.

It belongs to the class-I aminoacyl-tRNA synthetase family. As to quaternary structure, monomer. It depends on Zn(2+) as a cofactor.

The protein resides in the cytoplasm. It catalyses the reaction tRNA(Cys) + L-cysteine + ATP = L-cysteinyl-tRNA(Cys) + AMP + diphosphate. This chain is Cysteine--tRNA ligase, found in Campylobacter jejuni subsp. doylei (strain ATCC BAA-1458 / RM4099 / 269.97).